A 276-amino-acid polypeptide reads, in one-letter code: Protein G1 (276 aa).

Disordered regions lie at residues 1–30 (MSSSSAAALGSDDGCSPAELRPSRYESQKR) and 178–213 (SYHKKKKRRGGNMNGARGGGGGGARAGVNDGDATAP). Basic and acidic residues predominate over residues 21 to 30 (RPSRYESQKR). One can recognise an ALOG domain in the interval 24–183 (RYESQKRRDW…ARGISYHKKK (160 aa)). Basic residues predominate over residues 178–187 (SYHKKKKRRG). The short motif at 181–185 (KKKKR) is the Nuclear localization signal element. Gly residues predominate over residues 189–202 (NMNGARGGGGGGAR). Positions 203 to 213 (AGVNDGDATAP) are enriched in low complexity.

This sequence belongs to the plant homeotic and developmental regulators ALOG protein family. In terms of tissue distribution, expressed at the empty glumes of immature spikelets, which are lemmas of the sterile florets located at the lateral side of the spikelet, throughout their development.

It localises to the nucleus. In terms of biological role, probable transcription regulator that acts as a developmental regulator by promoting cell growth in response to light. Transcription regulator that restrains empty glumes growth, lemmas of the sterile florets located at the lateral side of the rice spikelet, to maintain their small size, probably by repressing lemma identity via transcription regulation. The protein is Protein G1 (G1) of Oryza sativa subsp. japonica (Rice).